The following is a 532-amino-acid chain: Probable cytochrome c oxidase subunit 1 (532 aa).

The next 8 membrane-spanning stretches (helical) occupy residues 33–53, 74–94, 95–115, 118–138, 163–183, 200–220, 252–272, and 284–304; these read IMYI…SLLF, VLIT…ALFG, GFGN…FPRL, ISFW…FVDG, MAIF…INLI, PLFV…MPVL, LFWF…FGIV, and IFGY…GFIV. His-79 contributes to the Fe(II)-heme a binding site. Cu cation contacts are provided by His-258 and Tyr-262. The Cu cation site is built by His-307 and His-308. 2 consecutive transmembrane segments (helical) span residues 318–338 and 355–375; these read ALIY…IKIF and MLFS…GIIL. Residue His-393 coordinates heme a3. The next 3 helical transmembrane spans lie at 394 to 414, 431 to 451, and 473 to 493; these read FHYT…YYWF, FWIT…LGLA, and IGAG…FYTL. Position 395 (His-395) interacts with Fe(II)-heme a.

Belongs to the heme-copper respiratory oxidase family.

The protein resides in the cell membrane. The enzyme catalyses 4 Fe(II)-[cytochrome c] + O2 + 8 H(+)(in) = 4 Fe(III)-[cytochrome c] + 2 H2O + 4 H(+)(out). It functions in the pathway energy metabolism; oxidative phosphorylation. Functionally, cytochrome c oxidase is the component of the respiratory chain that catalyzes the reduction of oxygen to water. Subunits 1-3 form the functional core of the enzyme complex. CO I is the catalytic subunit of the enzyme. Electrons originating in cytochrome c are transferred via the copper A center of subunit 2 and heme A of subunit 1 to the bimetallic center formed by heme A3 and copper B. The polypeptide is Probable cytochrome c oxidase subunit 1 (ctaD) (Rickettsia conorii (strain ATCC VR-613 / Malish 7)).